A 652-amino-acid polypeptide reads, in one-letter code: Beta-glucuronidase (652 aa).

Positions 1–22 (MVRGPAGAWAVLGPLLWGCGLA) are cleaved as a signal peptide. N173 and N420 each carry an N-linked (GlcNAc...) asparagine glycan. The Proton donor role is filled by E451. An N-linked (GlcNAc...) asparagine glycan is attached at N631.

It belongs to the glycosyl hydrolase 2 family. In terms of assembly, homotetramer.

The protein resides in the lysosome. The enzyme catalyses a beta-D-glucuronoside + H2O = D-glucuronate + an alcohol. With respect to regulation, inhibited by L-aspartic acid. Its function is as follows. Plays an important role in the degradation of dermatan and keratan sulfates. This chain is Beta-glucuronidase (GUSB), found in Sus scrofa (Pig).